The sequence spans 159 residues: Lipoprotein signal peptidase (159 aa).

A run of 2 helical transmembrane segments spans residues 64-84 (SVQWLGLLSLAVTTGLLIWVV) and 89-109 (PPFWQGMAVAFLLGGTLGNGI). Catalysis depends on residues Asp119 and Asp135. Residues 130–150 (IFNPADIAINLAVLCFLVDLW) form a helical membrane-spanning segment.

This sequence belongs to the peptidase A8 family.

It is found in the cell inner membrane. It carries out the reaction Release of signal peptides from bacterial membrane prolipoproteins. Hydrolyzes -Xaa-Yaa-Zaa-|-(S,diacylglyceryl)Cys-, in which Xaa is hydrophobic (preferably Leu), and Yaa (Ala or Ser) and Zaa (Gly or Ala) have small, neutral side chains.. It functions in the pathway protein modification; lipoprotein biosynthesis (signal peptide cleavage). Its function is as follows. This protein specifically catalyzes the removal of signal peptides from prolipoproteins. The chain is Lipoprotein signal peptidase from Parasynechococcus marenigrum (strain WH8102).